Consider the following 291-residue polypeptide: 4-hydroxy-tetrahydrodipicolinate synthase (291 aa).

T44 is a binding site for pyruvate. Y132 acts as the Proton donor/acceptor in catalysis. Catalysis depends on K160, which acts as the Schiff-base intermediate with substrate. Pyruvate is bound at residue I202.

It belongs to the DapA family. Homotetramer; dimer of dimers.

Its subcellular location is the cytoplasm. The catalysed reaction is L-aspartate 4-semialdehyde + pyruvate = (2S,4S)-4-hydroxy-2,3,4,5-tetrahydrodipicolinate + H2O + H(+). It participates in amino-acid biosynthesis; L-lysine biosynthesis via DAP pathway; (S)-tetrahydrodipicolinate from L-aspartate: step 3/4. Functionally, catalyzes the condensation of (S)-aspartate-beta-semialdehyde [(S)-ASA] and pyruvate to 4-hydroxy-tetrahydrodipicolinate (HTPA). This is 4-hydroxy-tetrahydrodipicolinate synthase from Rhizorhabdus wittichii (strain DSM 6014 / CCUG 31198 / JCM 15750 / NBRC 105917 / EY 4224 / RW1) (Sphingomonas wittichii).